The following is a 37-amino-acid chain: MKVRASIKRICRECKLIKRHGVNRIICVNPKHKQRQG.

The protein belongs to the bacterial ribosomal protein bL36 family.

This chain is Large ribosomal subunit protein bL36, found in Metamycoplasma arthritidis (strain 158L3-1) (Mycoplasma arthritidis).